The primary structure comprises 158 residues: Anti-tumor lectin (158 aa).

Residue Gln-1 is modified to Blocked amino end (Gln). Residues 12–155 (TSVDLAAPVT…STVVEAVTYT (144 aa)) enclose the Galectin domain. N-acetyl-alpha-neuraminyl-(2-&gt;3)-beta-D-galactosyl-(1-&gt;4)-beta-D-glucose contacts are provided by Asn-43, His-59, Arg-63, Asn-72, Arg-74, Trp-80, and Glu-83.

In terms of assembly, homodimer. In terms of tissue distribution, detected in the fruiting body.

Its function is as follows. Anti-tumor lectin with DNase activity. Inhibits the growth of several tumor cell lines in vitro. Induces lymphocyte infiltration and necrosis of tumor cells in a mouse tumor model. Induces apoptosis in HeLa cells. Binds N-acetylneuraminyl lactose (N-acetyl-alpha-neuraminyl-(2-&gt;3)-beta-D-galactosyl-(1-&gt;4)-beta-D-glucose). In Cyclocybe aegerita (Black poplar mushroom), this protein is Anti-tumor lectin.